Reading from the N-terminus, the 95-residue chain is uncharacterized protein (95 aa).

The segment at 46–68 (GDRGTNGRTEAEHDGIPHSRKKV) is disordered.

This is an uncharacterized protein from Schizosaccharomyces pombe (strain 972 / ATCC 24843) (Fission yeast).